Consider the following 371-residue polypeptide: Trans-enoyl reductase mycC (371 aa).

An NADP(+)-binding site is contributed by 51–54 (CDWK). Residue 140–147 (CVVGTVGL) participates in substrate binding. NADP(+) contacts are provided by residues 182-185 (STAS), 205-208 (SPAN), Y223, and 270-271 (FE). A substrate-binding site is contributed by 291–295 (GIRLL). Residue 361-362 (VS) participates in NADP(+) binding.

This sequence belongs to the zinc-containing alcohol dehydrogenase family. As to quaternary structure, monomer.

It catalyses the reaction L-leucine + 8 malonyl-CoA + 4 S-adenosyl-L-methionine + ATP + 9 NADPH + 12 H(+) = (5S)-5-(2-methylpropyl)-3-[(2E,6R,8E,10E,12E)-6,8,10,12-tetramethyltetradeca-2,8,10,12-tetraenoyl]-2,5-dihydro-1H-pyrrol-2-one + AMP + 4 S-adenosyl-L-homocysteine + 8 CO2 + diphosphate + 9 NADP(+) + 8 CoA + 7 H2O. It functions in the pathway mycotoxin biosynthesis. In terms of biological role, trans-enoyl reductase; part of the gene cluster that mediates the biosynthesis of myceliothermophins, mycotoxins that contain a trans-fused decalin ring system connected to a conjugated 3-pyrrolin-2-one moiety and that have potential anti-tumor properties. The polyketide synthase module (PKS) of the PKS-NRPS mycA is responsible for the synthesis of the octaketide backbone. The downstream nonribosomal peptide synthetase (NRPS) module then amidates the carboxyl end of the octaketide with a leucine. A reductase-like domain (R) at the C-terminus catalyzes the reductive release of the polyketide-amino acid intermediate. Because mycA lacks a designated enoylreductase (ER) domain, the required activity is provided the enoyl reductase mycC. Following mycA-catalyzed construction and release of aminoacyl polyketide aldehyde, Knoevenagel condensation yields the expected ketone. This C18 keto acyclic precursor is the substrate of the Diels-Alderase mycB, that catalyzes the Diels-Alder cycloaddition to produce myceliothermophin E. A yet unknown oxygenase involved in the production of myceliothermophin A, via substitution with a hydroxyl group at the C21, has still to be identified. The protein is Trans-enoyl reductase mycC of Thermothelomyces thermophilus (strain ATCC 42464 / BCRC 31852 / DSM 1799) (Sporotrichum thermophile).